The following is an 800-amino-acid chain: Calmodulin-sensitive adenylate cyclase (800 aa).

A signal peptide spans 1-33 (MTRNKFIPNKFSIISFSVLLFAISSSQAIEVNA). Positions 60–273 (KDSINNLVKT…MFEYMNKLEK (214 aa)) constitute an ATLF-like domain. The tract at residues 294–349 (DVLKGEKALKASGLVPEHADAFKKIARELNTYILFRPVNKLATNLIKSGVATKGLN) is catalytic CA1. Positions 350–489 (VHGKSSDWGP…NVEGVLKPLT (140 aa)) are catalytic CB. Histidine 351 (proton acceptor) is an active-site residue. The interval 490 to 622 (ADYDLFALAP…RFIEKNITGK (133 aa)) is catalytic CA2. Positions 491 and 493 each coordinate Mg(2+). 3',5'-cyclic AMP is bound by residues threonine 548 and 577–579 (HGT). Histidine 577 serves as a coordination point for Mg(2+). Residues 623-800 (DYLYYFNRSY…EVFQKIIDEK (178 aa)) form an interaction with calmodulin region.

The protein belongs to the adenylyl cyclase class-2 family. As to quaternary structure, interacts (via ATLF domain) with the cleaved form of protective antigen (PA-63) anthrax toxin; interaction is required for EF translocation into the host cytoplasm. It depends on Ca(2+) as a cofactor.

Its subcellular location is the secreted. The protein resides in the host cytoplasm. It is found in the host cytosol. It carries out the reaction ATP = 3',5'-cyclic AMP + diphosphate. Its activity is regulated as follows. Host calmodulin is an absolute requirement for its activation. Inhibited by ethyl 5-aminopyrazolo[1,5-a]quinazoline-3-carboxylate. Functionally, edema factor (EF), which constitutes one of the three proteins composing the anthrax toxin, causes edema in the host. Acts as a calmodulin-dependent adenylyl cyclase by converting ATP to cAMP, leading to dramatic elevation of intracellular cAMP levels in the host, thereby causing edema. EF is not toxic by itself and only acts as an edema factor when associated with protective antigen (PA) to form the edema toxin (EdTx). Required for the survival of germinated spores within macrophages at the early stages of infection. The chain is Calmodulin-sensitive adenylate cyclase (cya) from Bacillus anthracis.